The chain runs to 265 residues: Bradykinin-potentiating and C-type natriuretic peptides (265 aa).

The signal sequence occupies residues 1–23; it reads MVLSRLAASGLLLLALLALSVDG. The propeptide occupies 24-30; sequence KPVQQWA. A Pyrrolidone carboxylic acid modification is found at Gln-31. A propeptide spanning residues 44-50 is cleaved from the precursor; it reads LKVQQWA. Gln-51 carries the post-translational modification Pyrrolidone carboxylic acid. A propeptide spanning residues 64 to 70 is cleaved from the precursor; the sequence is LTVQQWA. Gln-71 bears the Pyrrolidone carboxylic acid mark. The propeptide occupies 81 to 87; sequence LTVQQWA. Position 88 is a pyrrolidone carboxylic acid (Gln-88). Residues 100-106 constitute a propeptide that is removed on maturation; sequence LEVQQWA. Gln-107 carries the post-translational modification Pyrrolidone carboxylic acid. Positions 118-120 are excised as a propeptide; the sequence is APL. Gln-121 bears the Pyrrolidone carboxylic acid mark. Val-126 is a propeptide. Gln-127 bears the Pyrrolidone carboxylic acid mark. Residues 132-241 constitute a propeptide that is removed on maturation; that stretch reads LLQPHESPAS…GGARRLKGLA (110 aa). The interval 153–211 is disordered; it reads GPEAASGVPSAGAEVGRSGSKAPAAPHRLSKSKGAAATSAASRPMRDLRPDGKQARQNW. Residues 184-194 are compositionally biased toward low complexity; sequence SKGAAATSAAS. Residues 196–206 show a composition bias toward basic and acidic residues; sequence PMRDLRPDGKQ. Cys-249 and Cys-265 are joined by a disulfide.

It in the N-terminal section; belongs to the bradykinin-potentiating peptide family. The protein in the C-terminal section; belongs to the natriuretic peptide family. In terms of tissue distribution, expressed by the venom gland.

It is found in the secreted. The protein resides in the cytoplasm. It localises to the cytosol. Its function is as follows. Modestly inhibits ACE (with highest affinity for the N-site) and reveals strong bradykinin-potentiating activity. Induces nitric oxide (NO) production depended on muscarinic acetylcholine receptor M1 subtype (CHRM1) and bradykinin B2 receptor (BDKRB2) activation. Both these receptors contribute to the vasodilation induced by this peptide that may have an indirect action on BDKRB2 and a direct agonistic action on CHRM1. In terms of biological role, peptide with several activities. It inhibits the activity of the angiotensin-converting enzyme (ACE) by a preferential interaction with its C-domain. It evokes transient hypotension (-14 mmHg) similar to that evoked by 0.5 ug of bradykinin, when injected alone into rats. It has a high bradykinin-potentiating effect (120%), when 60 nmol of BPP-10c are coinjected with 0.5 ug of bradykinin into rats. Does not affect angiotensin-1 pressor effects. Shows potent and long-lasting antihypertensive activity as well as a reduction of the heart rate. It also binds and dose-dependently promotes the activation of cytosolic argininosuccinate synthase (ASS1), an enzyme that catalyzes the conversion of citrulline, L-aspartate and ATP to argininosuccinate, AMP and pyrophosphate. It also enhances ASS1-dependent arginine production in HEK 293 cells, as well as in spontaneous hypertensive rat (SHR) and Wistar rat plasma. In addition, it induces the production of nitric-oxide (NO) by HUVEC cells via the endothelial nitric-oxide synthase (NOS3), which use arginine as a substrate and produce NO. It has been shown to be internalized by ASS1-expressing endothelial (HUVEC) and kidney (HEK 293) cells, and is detected homogenously distributed within the cell cytoplasm for up to 2 hours. Has a vasorelaxant activity in rat aortic strips and a diuretic potency in anesthetized rats. May act by activating natriuretic receptors (NPR1 and/or NPR2). This Bothrops insularis (Golden lancehead) protein is Bradykinin-potentiating and C-type natriuretic peptides.